A 146-amino-acid polypeptide reads, in one-letter code: Ferredoxin-thioredoxin reductase catalytic chain, chloroplastic (146 aa).

The N-terminal 31 residues, 1–31 (MNLQAVSCSFGFLSSPLGVTPRTSFRRFVIR), are a transit peptide targeting the chloroplast. A [4Fe-4S] cluster-binding site is contributed by C85. C87 serves as the catalytic Nucleophile. C87 and C117 are joined by a disulfide. 3 residues coordinate [4Fe-4S] cluster: C104, C106, and C115.

Belongs to the ferredoxin thioredoxin reductase beta subunit family. In terms of assembly, heterodimer of subunit A (variable subunit) and subunit B (catalytic subunit). Heterodimeric FTR forms a complex with ferredoxin and thioredoxin. [4Fe-4S] cluster serves as cofactor.

Its subcellular location is the plastid. It localises to the chloroplast. The catalysed reaction is [thioredoxin]-disulfide + 2 reduced [2Fe-2S]-[ferredoxin] + 2 H(+) = [thioredoxin]-dithiol + 2 oxidized [2Fe-2S]-[ferredoxin]. Its function is as follows. Catalytic subunit of the ferredoxin-thioredoxin reductase (FTR), which catalyzes the two-electron reduction of thioredoxins by the electrons provided by reduced ferredoxin. In Arabidopsis thaliana (Mouse-ear cress), this protein is Ferredoxin-thioredoxin reductase catalytic chain, chloroplastic.